The primary structure comprises 614 residues: ATP-dependent rRNA helicase SPB4 (614 aa).

The Q motif motif lies at 10-38; it reads WSVLKCDLHPWIKEAIKSLGYPTMTPVQA. Positions 41–233 constitute a Helicase ATP-binding domain; that stretch reads IPLFSGNKDV…RTGMANPVKI (193 aa). 54 to 61 is a binding site for ATP; sequence AVTGSGKT. The DEAD box motif lies at 181-184; that stretch reads DEAD. The 172-residue stretch at 260 to 431 folds into the Helicase C-terminal domain; sequence KISALIALIK…KFQKKFRKYM (172 aa). Residues 510–581 are a coiled coil; it reads EYADKQKEES…IEKQLMDDSS (72 aa). The segment covering 514-529 has biased composition (basic and acidic residues); the sequence is KQKEESRKKNLEEDKA. Residues 514–614 form a disordered region; the sequence is KQKEESRKKN…DSMQGSFDDL (101 aa). Residues 530–541 show a composition bias toward basic residues; it reads RKVHDAKKRKEL. Basic and acidic residues-rich tracts occupy residues 551–563 and 584–595; these read KTDKIETKQERRE and EETKVDWKEMVK. A compositionally biased stretch (polar residues) spans 604 to 614; that stretch reads SDSMQGSFDDL.

It belongs to the DEAD box helicase family. DDX55/SPB4 subfamily. Component of pre-60S ribosomal complexes.

It is found in the nucleus. The protein resides in the nucleolus. It catalyses the reaction ATP + H2O = ADP + phosphate + H(+). In terms of biological role, ATP-binding RNA helicase involved in the biogenesis of 60S ribosomal subunits. Binds 90S pre-ribosomal particles and dissociates from pre-60S ribosomal particles after processing of 27SB pre-rRNA. Required for the normal formation of 18S rRNA through the processing of pre-rRNAs at sites A0, A1 and A2, and the normal formation of 25S and 5.8S rRNAs through the processing of pre-rRNAs at sites C1 and C2. In Debaryomyces hansenii (strain ATCC 36239 / CBS 767 / BCRC 21394 / JCM 1990 / NBRC 0083 / IGC 2968) (Yeast), this protein is ATP-dependent rRNA helicase SPB4.